Consider the following 207-residue polypeptide: Ribosomal RNA small subunit methyltransferase G (207 aa).

Residues glycine 76, glutamine 81, 127–128, and arginine 141 each bind S-adenosyl-L-methionine; that span reads VE.

Belongs to the methyltransferase superfamily. RNA methyltransferase RsmG family.

The protein resides in the cytoplasm. The catalysed reaction is guanosine(527) in 16S rRNA + S-adenosyl-L-methionine = N(7)-methylguanosine(527) in 16S rRNA + S-adenosyl-L-homocysteine. Its function is as follows. Specifically methylates the N7 position of guanine in position 527 of 16S rRNA. The protein is Ribosomal RNA small subunit methyltransferase G of Neisseria meningitidis serogroup C / serotype 2a (strain ATCC 700532 / DSM 15464 / FAM18).